Reading from the N-terminus, the 571-residue chain is Urease subunit alpha (571 aa).

One can recognise a Urease domain in the interval 133-571; sequence GGIDTHIHFV…LPLAQRYFLF (439 aa). Positions 138, 140, and 221 each coordinate Ni(2+). Position 221 is an N6-carboxylysine (Lys-221). His-223 lines the substrate pocket. Residues His-250 and His-276 each coordinate Ni(2+). Residue His-324 is the Proton donor of the active site. Residue Asp-364 coordinates Ni(2+).

Belongs to the metallo-dependent hydrolases superfamily. Urease alpha subunit family. As to quaternary structure, heterotrimer of UreA (gamma), UreB (beta) and UreC (alpha) subunits. Three heterotrimers associate to form the active enzyme. The cofactor is Ni cation. In terms of processing, carboxylation allows a single lysine to coordinate two nickel ions.

It localises to the cytoplasm. It catalyses the reaction urea + 2 H2O + H(+) = hydrogencarbonate + 2 NH4(+). Its pathway is nitrogen metabolism; urea degradation; CO(2) and NH(3) from urea (urease route): step 1/1. The chain is Urease subunit alpha from Anaeromyxobacter sp. (strain K).